A 136-amino-acid polypeptide reads, in one-letter code: Large ribosomal subunit protein bL19 (136 aa).

Residues 1–23 form a disordered region; it reads MEETVNNQETPETSEEETADEET. Over residues 12–23 the composition is skewed to acidic residues; sequence ETSEEETADEET.

Belongs to the bacterial ribosomal protein bL19 family.

This protein is located at the 30S-50S ribosomal subunit interface and may play a role in the structure and function of the aminoacyl-tRNA binding site. The chain is Large ribosomal subunit protein bL19 from Dehalococcoides mccartyi (strain ATCC BAA-2266 / KCTC 15142 / 195) (Dehalococcoides ethenogenes (strain 195)).